Reading from the N-terminus, the 436-residue chain is GTPase Obg (436 aa).

The Obg domain maps to 2–160; sequence SMFLDTAKVS…RELALELKIL (159 aa). The OBG-type G domain maps to 161–338; that stretch reads ADVGLVGFPS…LLDATAQLLA (178 aa). GTP contacts are provided by residues 167–174, 192–196, 214–217, 284–287, and 319–321; these read GFPSVGKS, FTTIV, DLPG, NKMD, and SGI. S174 and T194 together coordinate Mg(2+). Residues 358-436 form the OCT domain; that stretch reads GFEEEEKAFD…IGKFEFEFVD (79 aa).

It belongs to the TRAFAC class OBG-HflX-like GTPase superfamily. OBG GTPase family. Monomer. Mg(2+) serves as cofactor.

Its subcellular location is the cytoplasm. Its function is as follows. An essential GTPase which binds GTP, GDP and possibly (p)ppGpp with moderate affinity, with high nucleotide exchange rates and a fairly low GTP hydrolysis rate. Plays a role in control of the cell cycle, stress response, ribosome biogenesis and in those bacteria that undergo differentiation, in morphogenesis control. This Streptococcus mutans serotype c (strain ATCC 700610 / UA159) protein is GTPase Obg.